Consider the following 624-residue polypeptide: Penicillin-binding protein 4 (624 aa).

Residues 1 to 21 form the signal peptide; sequence MTMLRKIIGWILLLCIIPLFA. Residue Glu-96 is the Proton donor; for transglycosylase activity of the active site. The Acyl-ester intermediate; for transpeptidase activity role is filled by Ser-388.

This sequence in the N-terminal section; belongs to the glycosyltransferase 51 family. The protein in the C-terminal section; belongs to the transpeptidase family. The N-terminus is blocked.

It localises to the cell membrane. The catalysed reaction is [GlcNAc-(1-&gt;4)-Mur2Ac(oyl-L-Ala-gamma-D-Glu-L-Lys-D-Ala-D-Ala)](n)-di-trans,octa-cis-undecaprenyl diphosphate + beta-D-GlcNAc-(1-&gt;4)-Mur2Ac(oyl-L-Ala-gamma-D-Glu-L-Lys-D-Ala-D-Ala)-di-trans,octa-cis-undecaprenyl diphosphate = [GlcNAc-(1-&gt;4)-Mur2Ac(oyl-L-Ala-gamma-D-Glu-L-Lys-D-Ala-D-Ala)](n+1)-di-trans,octa-cis-undecaprenyl diphosphate + di-trans,octa-cis-undecaprenyl diphosphate + H(+). It carries out the reaction Preferential cleavage: (Ac)2-L-Lys-D-Ala-|-D-Ala. Also transpeptidation of peptidyl-alanyl moieties that are N-acyl substituents of D-alanine.. Functionally, cell wall formation. Synthesis of cross-linked peptidoglycan from the lipid intermediates. The enzyme has a penicillin-insensitive transglycosylase N-terminal domain (formation of linear glycan strands) and a penicillin-sensitive transpeptidase C-terminal domain (cross-linking of the peptide subunits). Has a partially redundant function with PBP-2A (pbpA) during spore outgrowth. The protein is Penicillin-binding protein 4 of Bacillus subtilis (strain 168).